Reading from the N-terminus, the 153-residue chain is SsrA-binding protein (153 aa).

It belongs to the SmpB family.

The protein resides in the cytoplasm. Its function is as follows. Required for rescue of stalled ribosomes mediated by trans-translation. Binds to transfer-messenger RNA (tmRNA), required for stable association of tmRNA with ribosomes. tmRNA and SmpB together mimic tRNA shape, replacing the anticodon stem-loop with SmpB. tmRNA is encoded by the ssrA gene; the 2 termini fold to resemble tRNA(Ala) and it encodes a 'tag peptide', a short internal open reading frame. During trans-translation Ala-aminoacylated tmRNA acts like a tRNA, entering the A-site of stalled ribosomes, displacing the stalled mRNA. The ribosome then switches to translate the ORF on the tmRNA; the nascent peptide is terminated with the 'tag peptide' encoded by the tmRNA and targeted for degradation. The ribosome is freed to recommence translation, which seems to be the essential function of trans-translation. This is SsrA-binding protein from Macrococcus caseolyticus (strain JCSC5402) (Macrococcoides caseolyticum).